We begin with the raw amino-acid sequence, 286 residues long: Pantothenate synthetase (286 aa).

32 to 39 contacts ATP; it reads MGALHEGH. Catalysis depends on His-39, which acts as the Proton donor. A (R)-pantoate-binding site is contributed by Gln-63. Residue Gln-63 participates in beta-alanine binding. 149-152 contacts ATP; that stretch reads GEKD. A (R)-pantoate-binding site is contributed by Gln-155. ATP contacts are provided by residues Leu-178 and 186-189; that span reads SSSR.

Belongs to the pantothenate synthetase family. Homodimer.

The protein localises to the cytoplasm. The enzyme catalyses (R)-pantoate + beta-alanine + ATP = (R)-pantothenate + AMP + diphosphate + H(+). The protein operates within cofactor biosynthesis; (R)-pantothenate biosynthesis; (R)-pantothenate from (R)-pantoate and beta-alanine: step 1/1. Its function is as follows. Catalyzes the condensation of pantoate with beta-alanine in an ATP-dependent reaction via a pantoyl-adenylate intermediate. In Bartonella quintana (strain Toulouse) (Rochalimaea quintana), this protein is Pantothenate synthetase.